The primary structure comprises 436 residues: Nucleolar protein 4-like (436 aa).

The disordered stretch occupies residues 1–184; that stretch reads MSDSTWMSAD…KMNDSEGMDP (184 aa). Residues 41–61 are compositionally biased toward low complexity; that stretch reads SESGSGNGSSTLNPSTSSSTQ. A Phosphoserine modification is found at Ser-130. Residues 160–169 show a composition bias toward acidic residues; that stretch reads ADDDDDDHDD. Residues 170-184 are compositionally biased toward basic and acidic residues; it reads HEDNDKMNDSEGMDP. A Phosphoserine modification is found at Ser-295. Residues 351-366 show a composition bias toward polar residues; it reads QPPASLQTGNHSNGPT. Positions 351–400 are disordered; the sequence is QPPASLQTGNHSNGPTDLSMKGGASTTSTTPTPTPSSTSTSRPVPTAQLS. The segment covering 375–396 has biased composition (low complexity); the sequence is STTSTTPTPTPSSTSTSRPVPT.

The sequence is that of Nucleolar protein 4-like (NOL4L) from Pongo abelii (Sumatran orangutan).